The primary structure comprises 1056 residues: E3 SUMO-protein ligase ZNF451 (1056 aa).

Residues 1–39 (MGDPGPEIIESVPPAGPEASESTTDENEDDIQFVSEGPL) are disordered. The segment at 1–246 (MGDPGPEIIE…AADGHSNSLL (246 aa)) is sufficient for E3 SUMO-protein ligase activity. The tract at residues 1 to 344 (MGDPGPEIIE…RVRCQNAGPV (344 aa)) is important for interaction with SUMO1 and SUMO2. The segment at 30 to 37 (DIQFVSEG) is interaction with SUMO2 1. The PLRP signature appears at 38–41 (PLRP). The segment at 42–50 (VLEYIDLVS) is interaction with SUMO2 2. Residues Lys-75, Lys-77, Lys-106, Lys-139, and Lys-153 each participate in a glycyl lysine isopeptide (Lys-Gly) (interchain with G-Cter in SUMO2) cross-link. Ser-155 is subject to Phosphoserine. The residue at position 158 (Arg-158) is an Omega-N-methylarginine. A Glycyl lysine isopeptide (Lys-Gly) (interchain with G-Cter in SUMO2) cross-link involves residue Lys-167. Positions 168–521 (PILCPIMHCN…HMSRFHGGAH (354 aa)) are important for interaction with SMAD4. The C2H2-type 1 zinc finger occupies 169–195 (ILCPIMHCNKEFDNGHLLLGHLKRFDH). The segment at 212 to 234 (FACAVCYEHFVTQQQYKDHLLSR) adopts a C2H2-type 2; degenerate zinc-finger fold. Residues 253–277 (YACPQCFLLFSTKDECLKHMSTKNH) form a C2H2-type 3 zinc finger. Residues Lys-270, Lys-275, Lys-283, Lys-288, Lys-301, and Lys-309 each participate in a glycyl lysine isopeptide (Lys-Gly) (interchain with G-Cter in SUMO2) cross-link. A C2H2-type 4; atypical zinc finger spans residues 315 to 338 (VKCVACHQTLRSHMELTAHFRVRC). A C2H2-type 5 zinc finger spans residues 362–385 (GYCSDCNQVFMDVASTQSHKNSGH). Residue Lys-420 forms a Glycyl lysine isopeptide (Lys-Gly) (interchain with G-Cter in SUMO2) linkage. Phosphoserine is present on Ser-429. A Glycyl lysine isopeptide (Lys-Gly) (interchain with G-Cter in SUMO2) cross-link involves residue Lys-431. 2 C2H2-type zinc fingers span residues 494-517 (YKCVVCGKVCEDSGVMRLHMSRFH) and 527-550 (FWCRTCKKELVKKDAIMAHITEFH). Glycyl lysine isopeptide (Lys-Gly) (interchain with G-Cter in SUMO2) cross-links involve residues Lys-539 and Lys-583. The C2H2-type 8; atypical zinc finger occupies 604 to 629 (WQCRICEDMFESQECVKQHCMSLTSH). 2 C2H2-type zinc fingers span residues 634–657 (YSCAHCRKTFHKVETLYRHCQDEH) and 665–688 (YFCGLCDLIFNKEEEFLSHYKEHH). A Glycyl lysine isopeptide (Lys-Gly) (interchain with G-Cter in SUMO2) cross-link involves residue Lys-645. Residue Lys-704 forms a Glycyl lysine isopeptide (Lys-Gly) (interchain with G-Cter in SUMO1); alternate linkage. A Glycyl lysine isopeptide (Lys-Gly) (interchain with G-Cter in SUMO2); alternate cross-link involves residue Lys-704. Glycyl lysine isopeptide (Lys-Gly) (interchain with G-Cter in SUMO2) cross-links involve residues Lys-729 and Lys-746. C2H2-type zinc fingers lie at residues 751–774 (FRCSSCSATAQNVTDINTHVCQVH) and 787–810 (IKCGICTKAFQNTESAQQHFHRKH). Residues Lys-788, Lys-815, Lys-843, Lys-849, Lys-947, Lys-988, and Lys-989 each participate in a glycyl lysine isopeptide (Lys-Gly) (interchain with G-Cter in SUMO2) cross-link. Disordered stretches follow at residues 806–830 (FHRKHAALQKPTATPGGANRSSTCQ) and 839–858 (EKNLKQPSSQKHSDVEKGAE). Basic and acidic residues predominate over residues 849–858 (KHSDVEKGAE). A disordered region spans residues 1019–1045 (KECDSDDSSGMKGSPAEELRATEDVEL). Over residues 1033–1045 (PAEELRATEDVEL) the composition is skewed to basic and acidic residues. The interval 1045-1056 (LEEAIRRSLEEM) is important for ubiquitin binding.

The protein belongs to the krueppel C2H2-type zinc-finger protein family. In terms of assembly, homooligomer. Interacts (via N-terminal region) with SUMO1. Interacts (via N-terminal region) with SUMO2. Interacts simultaneously with two SUMO2 chains. Identified in a complex with SUMO2 and UBE2I/UBC9, where one ZNF451 interacts with one UBE2I/UBC9 and two SUMO2 chains, one bound to the UBE2I/UBC9 active site and the other to another region of the same UBE2I/UBC9 molecule. Interacts (via C-terminus) with ubiquitin. Interacts (via N-terminal zinc-finger domains) with SMAD4 (via MH2 domain). Interacts with SMAD2 and SMAD3. Identified in a complex that contains at least ZNF451, SMAD2, SMAD3 and SMAD4. Interacts with EP300. Inhibits interaction between EP300 and the SMAD4 complex. Interacts with SIMC1. Sumoylated. Predominantly sumoylated on the N-terminal region that is important for interaction with SUMO1 and SUMO2. Sumoylation is important for localization in nuclear granules; desumoylation leads to diffuse nucleoplasmic location. Autosumoylated (in vitro). Sumoylation enhances E3 SUMO-protein ligase activity.

Its subcellular location is the nucleus. It localises to the PML body. The protein localises to the nucleoplasm. The protein operates within protein modification; protein sumoylation. Functionally, E3 SUMO-protein ligase; has a preference for SUMO2 and SUMO3 and facilitates UBE2I/UBC9-mediated sumoylation of target proteins. Plays a role in protein SUMO2 modification in response to stress caused by DNA damage and by proteasome inhibitors (in vitro). Required for MCM4 sumoylation. Has no activity with SUMO1. Preferentially transfers an additional SUMO2 chain onto the SUMO2 consensus site 'Lys-11'. Negatively regulates transcriptional activation mediated by the SMAD4 complex in response to TGF-beta signaling. Inhibits EP300-mediated acetylation of histone H3 at 'Lys-9'. Plays a role in regulating the transcription of AR targets. This Mus musculus (Mouse) protein is E3 SUMO-protein ligase ZNF451 (Znf451).